Reading from the N-terminus, the 2134-residue chain is Genome polyprotein (2134 aa).

At Met-1–Lys-1377 the chain is on the cytoplasmic side. An LRAT domain is found at Ile-781–Lys-882. Catalysis depends on residues His-791 and His-802. Cys-863 acts as the Acyl-thioester intermediate in catalysis. In terms of domain architecture, SF3 helicase spans Leu-1127–Asp-1289. Residue Gly-1153–Ser-1160 coordinates ATP. An intramembrane segment occupies Trp-1378–Ala-1392. The Cytoplasmic portion of the chain corresponds to Leu-1393–Phe-2134. Residue Tyr-1415 is modified to O-(5'-phospho-RNA)-tyrosine. Positions Asp-1431–Leu-1643 constitute a Peptidase C3 domain. Residues His-1477, Asp-1515, and Cys-1603 each act as for protease 3C activity in the active site. One can recognise a RdRp catalytic domain in the interval Asp-1880–Lys-2001.

This sequence belongs to the picornaviridae polyprotein family. In terms of processing, specific enzymatic cleavages by the viral protease in vivo yield a variety of precursors and mature proteins. During virion maturation, non-infectious particles are rendered infectious following cleavage of VP0. This maturation cleavage is followed by a conformational change of the particle. VPg is uridylylated by the polymerase and is covalently linked to the 5'-end of genomic RNA. This uridylylated form acts as a nucleotide-peptide primer for the polymerase.

Its subcellular location is the virion. The protein localises to the host cytoplasm. It localises to the host cytoplasmic vesicle membrane. The enzyme catalyses RNA(n) + a ribonucleoside 5'-triphosphate = RNA(n+1) + diphosphate. It catalyses the reaction a ribonucleoside 5'-triphosphate + H2O = a ribonucleoside 5'-diphosphate + phosphate + H(+). It carries out the reaction Selective cleavage of Gln-|-Gly bond in the poliovirus polyprotein. In other picornavirus reactions Glu may be substituted for Gln, and Ser or Thr for Gly.. In terms of biological role, capsid proteins VP1, VP2, and VP3 form a closed capsid enclosing the viral positive strand RNA genome. All these proteins contain a beta-sheet structure called beta-barrel jelly roll. Together they form an icosahedral capsid (T=3) composed of 60 copies of each VP1, VP2, and VP3, with a diameter of approximately 300 Angstroms. VP1 is situated at the 12 fivefold axes, whereas VP2 and VP3 are located at the quasi-sixfold axes. VP0 precursor is a component of immature procapsids. The N-terminal domain of VP0, protein VP4, is needed for the assembly of 12 pentamers into the icosahedral structure. Unlike other picornaviruses, AEV VP4 may not be myristoylated. Its function is as follows. Protein 2B and 2BC precursor affect membrane integrity and cause an increase in membrane permeability. Functionally, associates with and induces structural rearrangements of intracellular membranes. It displays RNA-binding, nucleotide binding and NTPase activities. In terms of biological role, protein 3A, via its hydrophobic domain, serves as membrane anchor. Protein 3B is covalently linked to the 5'-end of both the positive-strand and negative-strand genomic RNAs. It acts as a genome-linked replication primer. Its function is as follows. Cysteine protease that generates mature viral proteins from the precursor polyprotein. In addition to its proteolytic activity, it binds to viral RNA, and thus influences viral genome replication. RNA and substrate bind cooperatively to the protease. Functionally, RNA-directed RNA polymerase 3D-POL replicates genomic and antigenomic RNA by recognizing replications specific signals. The chain is Genome polyprotein from Avian encephalomyelitis virus (strain Van Reokel) (AEV).